A 473-amino-acid polypeptide reads, in one-letter code: Ribulose bisphosphate carboxylase large chain (473 aa).

Residues Asn116 and Thr166 each coordinate substrate. Lys168 functions as the Proton acceptor in the catalytic mechanism. Lys170 contributes to the substrate binding site. Mg(2+) contacts are provided by Lys194, Asp196, and Glu197. Lys194 is modified (N6-carboxylysine). Catalysis depends on His287, which acts as the Proton acceptor. Residues Arg288, His320, and Ser372 each coordinate substrate.

The protein belongs to the RuBisCO large chain family. Type I subfamily. As to quaternary structure, heterohexadecamer of 8 large chains and 8 small chains. It depends on Mg(2+) as a cofactor.

The catalysed reaction is 2 (2R)-3-phosphoglycerate + 2 H(+) = D-ribulose 1,5-bisphosphate + CO2 + H2O. The enzyme catalyses D-ribulose 1,5-bisphosphate + O2 = 2-phosphoglycolate + (2R)-3-phosphoglycerate + 2 H(+). Functionally, ruBisCO catalyzes two reactions: the carboxylation of D-ribulose 1,5-bisphosphate, the primary event in carbon dioxide fixation, as well as the oxidative fragmentation of the pentose substrate. Both reactions occur simultaneously and in competition at the same active site. This is Ribulose bisphosphate carboxylase large chain from Thiomonas intermedia (strain K12) (Thiobacillus intermedius).